The sequence spans 371 residues: tRNA-specific 2-thiouridylase MnmA (371 aa).

Residues 14-21 (GMSGGVDS) and M40 contribute to the ATP site. The interaction with target base in tRNA stretch occupies residues 100–102 (NPD). C105 (nucleophile) is an active-site residue. A disulfide bridge links C105 with C205. G129 provides a ligand contact to ATP. Positions 155-157 (KDQ) are interaction with tRNA. Catalysis depends on C205, which acts as the Cysteine persulfide intermediate. Residues 321-322 (RY) are interaction with tRNA.

The protein belongs to the MnmA/TRMU family.

The protein localises to the cytoplasm. It catalyses the reaction S-sulfanyl-L-cysteinyl-[protein] + uridine(34) in tRNA + AH2 + ATP = 2-thiouridine(34) in tRNA + L-cysteinyl-[protein] + A + AMP + diphosphate + H(+). Functionally, catalyzes the 2-thiolation of uridine at the wobble position (U34) of tRNA, leading to the formation of s(2)U34. This Bordetella parapertussis (strain 12822 / ATCC BAA-587 / NCTC 13253) protein is tRNA-specific 2-thiouridylase MnmA.